The primary structure comprises 230 residues: 7-cyano-7-deazaguanine synthase (230 aa).

Ile-9–Leu-19 contacts ATP. Residues Cys-192, Cys-202, Cys-205, and Cys-208 each contribute to the Zn(2+) site.

Belongs to the QueC family. Zn(2+) is required as a cofactor.

The enzyme catalyses 7-carboxy-7-deazaguanine + NH4(+) + ATP = 7-cyano-7-deazaguanine + ADP + phosphate + H2O + H(+). Its pathway is purine metabolism; 7-cyano-7-deazaguanine biosynthesis. Catalyzes the ATP-dependent conversion of 7-carboxy-7-deazaguanine (CDG) to 7-cyano-7-deazaguanine (preQ(0)). This is 7-cyano-7-deazaguanine synthase from Myxococcus xanthus (strain DK1622).